The following is a 134-amino-acid chain: Holo-[acyl-carrier-protein] synthase (134 aa).

Positions 8 and 57 each coordinate Mg(2+).

This sequence belongs to the P-Pant transferase superfamily. AcpS family. Mg(2+) serves as cofactor.

The protein localises to the cytoplasm. The enzyme catalyses apo-[ACP] + CoA = holo-[ACP] + adenosine 3',5'-bisphosphate + H(+). Its function is as follows. Transfers the 4'-phosphopantetheine moiety from coenzyme A to a Ser of acyl-carrier-protein. This Agrobacterium fabrum (strain C58 / ATCC 33970) (Agrobacterium tumefaciens (strain C58)) protein is Holo-[acyl-carrier-protein] synthase.